The following is a 540-amino-acid chain: MNTLPEHSCDVLIIGSGAAGLSLALRLADQHQVIVLSKGPVTEGSTFYAQGGIAAVFDETDSIDSHVEDTLIAGAGICDRHAVEFVASNARSCVQWLIDQGVLFDTHIQPNGEESYHLTREGGHSHRRILHAADATGREVETTLVSKALNHPNIRVLERSNAVDLIVSDKIGLPGTRRVVGAWVWNRNKETVETCHAKAVVLATGGASKVYQYTTNPDISSGDGIAMAWRAGCRVANLEFNQFHPTALYHPQARNFLLTEALRGEGAYLKRPDGTRFMPDFDERGELAPRDIVARAIDHEMKRLGADCMFLDISHKPADFIRQHFPMIYEKLLGLGIDLTQEPVPIVPAAHYTCGGVMVDDHGRTDVEGLYAIGEVSYTGLHGANRMASNSLLECLVYGWSAAEDITRRMPYAHDISTLPPWDESRVENPDERVVIQHNWHELRLFMWDYVGIVRTTKRLERALRRITMLQQEIDEYYAHFRVSNNLLELRNLVQVAELIVRCAMMRKESRGLHFTLDYPELLTHSGPSILSPGNHYINR.

FAD-binding positions include 16–19 (SGAA), lysine 38, 45–52 (STFYAQGG), 161–162 (NA), and aspartate 223. Residues histidine 244 and 259-260 (TE) contribute to the succinate site. Arginine 290 serves as the catalytic Proton donor/acceptor. Position 375 (glutamate 375) interacts with FAD. Serine 389 is a binding site for succinate. 391-392 (SL) serves as a coordination point for FAD.

The protein belongs to the FAD-dependent oxidoreductase 2 family. NadB subfamily. In terms of assembly, monomer. Homodimer. Both the monomeric and dimeric forms of the enzyme are catalytically active. It depends on FAD as a cofactor.

The protein localises to the cytoplasm. It catalyses the reaction L-aspartate + O2 = iminosuccinate + H2O2. The catalysed reaction is fumarate + L-aspartate = iminosuccinate + succinate. The protein operates within cofactor biosynthesis; NAD(+) biosynthesis; iminoaspartate from L-aspartate (oxidase route): step 1/1. Its activity is regulated as follows. Inhibited by the product iminoaspartate. Competitively inhibited by mesotartrate. NAD acts as a competitive inhibitor to FAD. Inhibited by iodoacetic acid, diethylpyrocarbonate and tetranitromethane. Its function is as follows. Catalyzes the oxidation of L-aspartate to iminoaspartate, the first step in the de novo biosynthesis of NAD(+). Can use either oxygen or fumarate as electron acceptors, which allows the enzyme to be functional under aerobic and anaerobic conditions. In vivo, fumarate is used under anaerobic conditions, and oxygen is the predominant electron acceptor under aerobic conditions due to the lower fumarate levels. In vitro, fumarate is a more efficient electron acceptor and is kinetically superior to oxygen. This is L-aspartate oxidase from Escherichia coli (strain K12).